The following is a 122-amino-acid chain: Small ribosomal subunit protein uS13 (122 aa).

Residues 98 to 122 (VRGQKTKSNARTRKGPRPSRIKKKK) are disordered. A compositionally biased stretch (basic residues) spans 101 to 122 (QKTKSNARTRKGPRPSRIKKKK).

It belongs to the universal ribosomal protein uS13 family. Part of the 30S ribosomal subunit. Forms a loose heterodimer with protein S19. Forms two bridges to the 50S subunit in the 70S ribosome.

Located at the top of the head of the 30S subunit, it contacts several helices of the 16S rRNA. In the 70S ribosome it contacts the 23S rRNA (bridge B1a) and protein L5 of the 50S subunit (bridge B1b), connecting the 2 subunits; these bridges are implicated in subunit movement. Contacts the tRNAs in the A and P-sites. The chain is Small ribosomal subunit protein uS13 from Thermosipho africanus (strain TCF52B).